The primary structure comprises 1396 residues: DNA-directed RNA polymerase subunit beta' (1396 aa).

Zn(2+) is bound by residues cysteine 72, cysteine 74, cysteine 87, and cysteine 90. Residues aspartate 463, aspartate 465, and aspartate 467 each contribute to the Mg(2+) site. Residues cysteine 814, cysteine 889, cysteine 896, and cysteine 899 each contribute to the Zn(2+) site.

This sequence belongs to the RNA polymerase beta' chain family. As to quaternary structure, the RNAP catalytic core consists of 2 alpha, 1 beta, 1 beta' and 1 omega subunit. When a sigma factor is associated with the core the holoenzyme is formed, which can initiate transcription. The cofactor is Mg(2+). Zn(2+) serves as cofactor.

It carries out the reaction RNA(n) + a ribonucleoside 5'-triphosphate = RNA(n+1) + diphosphate. In terms of biological role, DNA-dependent RNA polymerase catalyzes the transcription of DNA into RNA using the four ribonucleoside triphosphates as substrates. The sequence is that of DNA-directed RNA polymerase subunit beta' from Chlamydia trachomatis serovar L2 (strain ATCC VR-902B / DSM 19102 / 434/Bu).